A 440-amino-acid chain; its full sequence is Glucoside xylosyltransferase 1 (440 aa).

The Cytoplasmic segment spans residues 1–6; sequence MRRYLR. A helical; Signal-anchor for type II membrane protein membrane pass occupies residues 7–29; sequence VVVLCVACGFCSLLYAFSQLAVS. Topologically, residues 30–440 are lumenal; the sequence is LEEGTGGGGG…DRYARSPKEK (411 aa). Residues asparagine 173, asparagine 237, and asparagine 278 are each glycosylated (N-linked (GlcNAc...) asparagine).

This sequence belongs to the glycosyltransferase 8 family.

Its subcellular location is the membrane. It carries out the reaction 3-O-(beta-D-glucosyl)-L-seryl-[EGF-like domain protein] + UDP-alpha-D-xylose = 3-O-[alpha-D-xylosyl-(1-&gt;3)-beta-D-glucosyl]-L-seryl-[EGF-like domain protein] + UDP + H(+). In terms of biological role, glycosyltransferase which elongates the O-linked glucose attached to EGF-like repeats in the extracellular domain of Notch proteins by catalyzing the addition of xylose. The protein is Glucoside xylosyltransferase 1 (GXYLT1) of Homo sapiens (Human).